The sequence spans 532 residues: CTP synthase (532 aa).

Residues 1 to 267 (MTKYIFVTGG…DDIVLEHLQL (267 aa)) are amidoligase domain. Serine 13 provides a ligand contact to CTP. A UTP-binding site is contributed by serine 13. Position 14–19 (14–19 (SIGKGI)) interacts with ATP. Position 54 (tyrosine 54) interacts with L-glutamine. An ATP-binding site is contributed by aspartate 71. Residues aspartate 71 and glutamate 141 each coordinate Mg(2+). CTP is bound by residues 148–150 (DIE), 188–193 (KTKPTQ), and lysine 224. UTP contacts are provided by residues 188–193 (KTKPTQ) and lysine 224. In terms of domain architecture, Glutamine amidotransferase type-1 spans 292-532 (RIGLVGKYVS…DFVGAALNNK (241 aa)). Position 354 (glycine 354) interacts with L-glutamine. The Nucleophile; for glutamine hydrolysis role is filled by cysteine 381. L-glutamine contacts are provided by residues 382–385 (LGMQ), glutamate 405, and arginine 462. Residues histidine 507 and glutamate 509 contribute to the active site.

The protein belongs to the CTP synthase family. In terms of assembly, homotetramer.

It carries out the reaction UTP + L-glutamine + ATP + H2O = CTP + L-glutamate + ADP + phosphate + 2 H(+). The enzyme catalyses L-glutamine + H2O = L-glutamate + NH4(+). It catalyses the reaction UTP + NH4(+) + ATP = CTP + ADP + phosphate + 2 H(+). It participates in pyrimidine metabolism; CTP biosynthesis via de novo pathway; CTP from UDP: step 2/2. With respect to regulation, allosterically activated by GTP, when glutamine is the substrate; GTP has no effect on the reaction when ammonia is the substrate. The allosteric effector GTP functions by stabilizing the protein conformation that binds the tetrahedral intermediate(s) formed during glutamine hydrolysis. Inhibited by the product CTP, via allosteric rather than competitive inhibition. In terms of biological role, catalyzes the ATP-dependent amination of UTP to CTP with either L-glutamine or ammonia as the source of nitrogen. Regulates intracellular CTP levels through interactions with the four ribonucleotide triphosphates. This is CTP synthase from Listeria innocua serovar 6a (strain ATCC BAA-680 / CLIP 11262).